Consider the following 39-residue polypeptide: Basic phospholipase A2 (39 aa).

Tyrosine 27, glycine 29, and glycine 31 together coordinate Ca(2+).

This sequence belongs to the phospholipase A2 family. Group II subfamily. D49 sub-subfamily. Requires Ca(2+) as cofactor. Expressed by the venom gland.

It is found in the secreted. The catalysed reaction is a 1,2-diacyl-sn-glycero-3-phosphocholine + H2O = a 1-acyl-sn-glycero-3-phosphocholine + a fatty acid + H(+). Its activity is regulated as follows. Is selectively inhibited by the gamma-phospholipase A2 inhibitor (PLI) CgMIP-I (AC P0DQP7) but not by the alpha-PLI CgMIP-II (AC P0DQP8). Its function is as follows. Snake venom phospholipase A2 (PLA2) that shows high myotoxic activities, induces mild edema, and shows cytolytic, and anti-coagulant activities, as well as intracerebral lethal effect. Does not induce lethality at a dose of 5 ug/g, when intravenously injected into mice. PLA2 catalyzes the calcium-dependent hydrolysis of the 2-acyl groups in 3-sn-phosphoglycerides. This is Basic phospholipase A2 from Cerrophidion godmani (Porthidium godmani).